We begin with the raw amino-acid sequence, 117 residues long: Small ribosomal subunit protein eS25 (117 aa).

The tract at residues 1–38 (MPPKKDAKSSAKQPQKTQKKKEGSGGGKAKKKKWSKGK) is disordered. Residues 28–37 (KAKKKKWSKG) show a composition bias toward basic residues.

The protein belongs to the eukaryotic ribosomal protein eS25 family.

The polypeptide is Small ribosomal subunit protein eS25 (RpS25) (Drosophila melanogaster (Fruit fly)).